A 376-amino-acid chain; its full sequence is Meiotically up-regulated gene 183 protein (376 aa).

The segment at 334-376 (SLENVDDMDDIDVKEPLFSDNDEDVENSDSEDGSESIGSEDEE) is disordered. Positions 353–376 (DNDEDVENSDSEDGSESIGSEDEE) are enriched in acidic residues.

The protein belongs to the RTT106 family.

In terms of biological role, has a role in meiosis. This chain is Meiotically up-regulated gene 183 protein (mug183), found in Schizosaccharomyces pombe (strain 972 / ATCC 24843) (Fission yeast).